Reading from the N-terminus, the 420-residue chain is Glutamate dehydrogenase (420 aa).

The active site involves lysine 105. 220–226 (GYGNAGY) lines the NAD(+) pocket.

The protein belongs to the Glu/Leu/Phe/Val dehydrogenases family. Homohexamer.

It localises to the cytoplasm. It carries out the reaction L-glutamate + NAD(+) + H2O = 2-oxoglutarate + NH4(+) + NADH + H(+). The catalysed reaction is L-glutamate + NADP(+) + H2O = 2-oxoglutarate + NH4(+) + NADPH + H(+). This is Glutamate dehydrogenase (gdhA) from Pyrococcus abyssi (strain GE5 / Orsay).